The chain runs to 149 residues: UPF0310 protein SSO2595 (149 aa).

This sequence belongs to the UPF0310 family.

The sequence is that of UPF0310 protein SSO2595 from Saccharolobus solfataricus (strain ATCC 35092 / DSM 1617 / JCM 11322 / P2) (Sulfolobus solfataricus).